Reading from the N-terminus, the 314-residue chain is WD repeat-containing protein 38 (314 aa).

7 WD repeats span residues 19–58, 61–100, 103–142, 145–184, 190–228, 231–272, and 274–312; these read QHGG…LLWR, GHTG…CLRV, GHQR…MLRL, GHRD…PAVS, GHSA…LLIQ, GHVT…ETLK, and VLDV…PRDP. Positions 294–314 are disordered; the sequence is AADQTRRQISRTSKSPRDPQT.

This is WD repeat-containing protein 38 (WDR38) from Homo sapiens (Human).